The sequence spans 450 residues: Folate synthesis bifunctional protein (450 aa).

Residues 1 to 166 are HPPK; that stretch reads MTTWNFVCLG…TFAELAAIYP (166 aa). The Pterin-binding domain occupies 180–441; the sequence is TQIMGIVNVT…QVEGNRRVLA (262 aa). The tract at residues 182–450 is DHPS; the sequence is IMGIVNVTDD…AAAAWSGMPV (269 aa). Asn187 contacts Mg(2+). (7,8-dihydropterin-6-yl)methyl diphosphate is bound by residues Thr227, Asp267, Asn287, Asp358, Lys395, and 429–431; that span reads RVH.

It in the C-terminal section; belongs to the DHPS family. This sequence in the N-terminal section; belongs to the HPPK family. Mg(2+) is required as a cofactor.

The catalysed reaction is 6-hydroxymethyl-7,8-dihydropterin + ATP = (7,8-dihydropterin-6-yl)methyl diphosphate + AMP + H(+). It catalyses the reaction (7,8-dihydropterin-6-yl)methyl diphosphate + 4-aminobenzoate = 7,8-dihydropteroate + diphosphate. It participates in cofactor biosynthesis; tetrahydrofolate biosynthesis; 2-amino-4-hydroxy-6-hydroxymethyl-7,8-dihydropteridine diphosphate from 7,8-dihydroneopterin triphosphate: step 4/4. It functions in the pathway cofactor biosynthesis; tetrahydrofolate biosynthesis; 7,8-dihydrofolate from 2-amino-4-hydroxy-6-hydroxymethyl-7,8-dihydropteridine diphosphate and 4-aminobenzoate: step 1/2. The sequence is that of Folate synthesis bifunctional protein (folKP) from Chlamydia muridarum (strain MoPn / Nigg).